We begin with the raw amino-acid sequence, 1377 residues long: DNA-directed RNA polymerase subunit beta' (1377 aa).

Residues Cys60, Cys62, Cys75, and Cys78 each coordinate Zn(2+). 3 residues coordinate Mg(2+): Asp449, Asp451, and Asp453. The Zn(2+) site is built by Cys777, Cys851, Cys858, and Cys861.

Belongs to the RNA polymerase beta' chain family. In terms of assembly, the RNAP catalytic core consists of 2 alpha, 1 beta, 1 beta' and 1 omega subunit. When a sigma factor is associated with the core the holoenzyme is formed, which can initiate transcription. The cofactor is Mg(2+). Requires Zn(2+) as cofactor.

It catalyses the reaction RNA(n) + a ribonucleoside 5'-triphosphate = RNA(n+1) + diphosphate. In terms of biological role, DNA-dependent RNA polymerase catalyzes the transcription of DNA into RNA using the four ribonucleoside triphosphates as substrates. In Borrelia hermsii (strain HS1 / DAH), this protein is DNA-directed RNA polymerase subunit beta'.